The following is a 279-amino-acid chain: Putative pyruvate, phosphate dikinase regulatory protein (279 aa).

156–163 (GVSRTSKT) is a binding site for ADP.

The protein belongs to the pyruvate, phosphate/water dikinase regulatory protein family. PDRP subfamily.

The catalysed reaction is N(tele)-phospho-L-histidyl/L-threonyl-[pyruvate, phosphate dikinase] + ADP = N(tele)-phospho-L-histidyl/O-phospho-L-threonyl-[pyruvate, phosphate dikinase] + AMP + H(+). It catalyses the reaction N(tele)-phospho-L-histidyl/O-phospho-L-threonyl-[pyruvate, phosphate dikinase] + phosphate + H(+) = N(tele)-phospho-L-histidyl/L-threonyl-[pyruvate, phosphate dikinase] + diphosphate. Bifunctional serine/threonine kinase and phosphorylase involved in the regulation of the pyruvate, phosphate dikinase (PPDK) by catalyzing its phosphorylation/dephosphorylation. In Maricaulis maris (strain MCS10) (Caulobacter maris), this protein is Putative pyruvate, phosphate dikinase regulatory protein.